Consider the following 120-residue polypeptide: Large ribosomal subunit protein uL18 (120 aa).

The protein belongs to the universal ribosomal protein uL18 family. Part of the 50S ribosomal subunit; part of the 5S rRNA/L5/L18/L25 subcomplex. Contacts the 5S and 23S rRNAs.

Its function is as follows. This is one of the proteins that bind and probably mediate the attachment of the 5S RNA into the large ribosomal subunit, where it forms part of the central protuberance. The polypeptide is Large ribosomal subunit protein uL18 (Bradyrhizobium sp. (strain ORS 278)).